The sequence spans 161 residues: Protein shisa-like-2B (161 aa).

The helical transmembrane segment at 65 to 85 (IGALIGLGIAALVLLAFVISV) threads the bilayer. The segment at 115-134 (QEGNSNRKSKAPRSNAASNS) is disordered.

Belongs to the shisa family.

It is found in the membrane. The sequence is that of Protein shisa-like-2B (SHISAL2B) from Bos taurus (Bovine).